Reading from the N-terminus, the 249-residue chain is NAD-dependent protein deacylase 2 (249 aa).

A Deacetylase sirtuin-type domain is found at 1–240 (MNVADLLASS…PRLVEEVKRR (240 aa)). NAD(+) is bound at residue 18 to 37 (GAGISAESGVPTFRGPGGLW). Tyrosine 62 and arginine 65 together coordinate substrate. 96–99 (QNVD) contributes to the NAD(+) binding site. Histidine 114 (proton acceptor) is an active-site residue. Residues cysteine 122, cysteine 125, cysteine 142, and cysteine 145 each coordinate Zn(2+). Residues 182–184 (GTS), 208–210 (NVE), and alanine 226 contribute to the NAD(+) site.

Belongs to the sirtuin family. Class III subfamily. Requires Zn(2+) as cofactor.

The protein resides in the cytoplasm. The catalysed reaction is N(6)-acetyl-L-lysyl-[protein] + NAD(+) + H2O = 2''-O-acetyl-ADP-D-ribose + nicotinamide + L-lysyl-[protein]. The enzyme catalyses N(6)-succinyl-L-lysyl-[protein] + NAD(+) + H2O = 2''-O-succinyl-ADP-D-ribose + nicotinamide + L-lysyl-[protein]. In terms of biological role, NAD-dependent lysine deacetylase and desuccinylase that specifically removes acetyl and succinyl groups on target proteins. Modulates the activities of several proteins which are inactive in their acylated form. Deacetylates the N-terminal lysine residue of Alba, the major archaeal chromatin protein and that, in turn, increases Alba's DNA binding affinity, thereby repressing transcription. This Pyrobaculum aerophilum (strain ATCC 51768 / DSM 7523 / JCM 9630 / CIP 104966 / NBRC 100827 / IM2) protein is NAD-dependent protein deacylase 2.